The primary structure comprises 445 residues: GTPase Der (445 aa).

EngA-type G domains lie at 3–167 and 180–353; these read PVIA…NLPD and IKLA…ASAN. GTP is bound by residues 9–16, 56–60, 119–122, 186–193, 233–237, and 298–301; these read GRPNVGKS, DTGGF, NKAE, DTAGL, and NKWD. The 85-residue stretch at 354–438 folds into the KH-like domain; that stretch reads RKMSTPVLTR…PLRIQLKSSV (85 aa).

This sequence belongs to the TRAFAC class TrmE-Era-EngA-EngB-Septin-like GTPase superfamily. EngA (Der) GTPase family. Associates with the 50S ribosomal subunit.

Functionally, GTPase that plays an essential role in the late steps of ribosome biogenesis. This Polaromonas naphthalenivorans (strain CJ2) protein is GTPase Der.